Here is a 200-residue protein sequence, read N- to C-terminus: Large ribosomal subunit protein bL25 (200 aa).

It belongs to the bacterial ribosomal protein bL25 family. CTC subfamily. In terms of assembly, part of the 50S ribosomal subunit; part of the 5S rRNA/L5/L18/L25 subcomplex. Contacts the 5S rRNA. Binds to the 5S rRNA independently of L5 and L18.

Its function is as follows. This is one of the proteins that binds to the 5S RNA in the ribosome where it forms part of the central protuberance. This Pseudomonas fluorescens (strain Pf0-1) protein is Large ribosomal subunit protein bL25.